Here is a 174-residue protein sequence, read N- to C-terminus: 5-hydroxymethyl-dUMP N-hydrolase (174 aa).

Alanine 2 carries the N-acetylalanine modification. Glycine 27 contributes to the 5-hydroxymethyl-dUMP binding site. Serine 28 carries the phosphoserine modification. 5-hydroxymethyl-dUMP is bound by residues isoleucine 29, arginine 30, glycine 31, serine 98, glycine 100, and glutamate 104. The residue at position 98 (serine 98) is a Phosphoserine. Phosphoserine occurs at positions 123, 128, 138, and 169. Serine 128 is a binding site for 5-hydroxymethyl-dUMP.

The protein belongs to the 2'-deoxynucleoside 5'-phosphate N-hydrolase 1 family. In terms of assembly, monomer and homodimer. Expressed at low levels in brain, colon, lung, peripheral blood leukocytes, placenta, small intestine, and thymus. Expressed at high levels in heart, kidney, liver, skeletal muscle and spleen. Overexpressed in a significant proportion of breast cancers.

It is found in the cytoplasm. The protein localises to the nucleus. It catalyses the reaction 5-hydroxymethyl-dUMP + H2O = 5-hydroxymethyluracil + 2-deoxy-D-ribose 5-phosphate. Inhibited by AMP and GMP. Part of a nucleotide salvage pathway that eliminates epigenetically modified 5-hydroxymethyl-dCMP (hmdCMP) in a two-step process entailing deamination to cytotoxic 5-hydroxymethyl-dUMP (hmdUMP), followed by its hydrolysis into 5-hydroxymethyluracil (hmU) and 2-deoxy-D-ribose 5-phosphate (deoxyribosephosphate). Catalyzes the second step in that pathway, the hydrolysis of the N-glycosidic bond in hmdUMP, degrading this cytotoxic nucleotide to avoid its genomic integration. The protein is 5-hydroxymethyl-dUMP N-hydrolase of Homo sapiens (Human).